The primary structure comprises 202 residues: Dephospho-CoA kinase (202 aa).

A DPCK domain is found at 4-202 (FLGLTGGIAT…EGVCHKSGMS (199 aa)). 12–17 (ATGKTT) contacts ATP.

This sequence belongs to the CoaE family.

The protein resides in the cytoplasm. It catalyses the reaction 3'-dephospho-CoA + ATP = ADP + CoA + H(+). Its pathway is cofactor biosynthesis; coenzyme A biosynthesis; CoA from (R)-pantothenate: step 5/5. In terms of biological role, catalyzes the phosphorylation of the 3'-hydroxyl group of dephosphocoenzyme A to form coenzyme A. This Latilactobacillus sakei subsp. sakei (strain 23K) (Lactobacillus sakei subsp. sakei) protein is Dephospho-CoA kinase.